The sequence spans 411 residues: ATP-dependent Clp protease ATP-binding subunit ClpX (411 aa).

The region spanning 1–49 (MSDKNIRCSFCGRTQKEVKKLIAGPGVYICDECVKLAYDIIEEEDSEEI) is the ClpX-type ZB domain. Zn(2+)-binding residues include C8, C11, C30, and C33. 115–122 (PTGVGKTL) contacts ATP.

The protein belongs to the ClpX chaperone family. As to quaternary structure, component of the ClpX-ClpP complex. Forms a hexameric ring that, in the presence of ATP, binds to fourteen ClpP subunits assembled into a disk-like structure with a central cavity, resembling the structure of eukaryotic proteasomes.

Its function is as follows. ATP-dependent specificity component of the Clp protease. It directs the protease to specific substrates. Can perform chaperone functions in the absence of ClpP. The sequence is that of ATP-dependent Clp protease ATP-binding subunit ClpX from Dictyoglomus turgidum (strain DSM 6724 / Z-1310).